Reading from the N-terminus, the 415-residue chain is MDEVLNLAKKAKEASKKLAQLSTEQKNRALLKIAQYLEENMEKILTENQKDLAEAKKGGLSPAFIERLTLNEKRILDMAEGVRQVAKLPDPVGEVLGMTRRPNGLVIGQVRVPLGVVGIIYESRPNVTVDAAALCLKAGNAVILRGGKEAFNSNLALVTLMEEALRSEEIPEGAVGMIKTTSRDAANYLMRLNGYLDVLIPRGGAGLIKTVVENSTVPVIETGVGNCHVYVEEDADLEMAERIIINAKCQRPAVCNAMETLLVHEKIAPVFLPQIGKALKENGVEIRGCEVTRRYIPDALPATEEDYYTEFLDLILAVRVVRDLDEAIAHITKYGSGHSEAIVTRDYFKARRFTEEVDAAAVYVNASTRFTDGFEFGFGAEIGISTQKLHARGPMGLKELTTTKYVIYGTGQIRG.

It belongs to the gamma-glutamyl phosphate reductase family.

It localises to the cytoplasm. It carries out the reaction L-glutamate 5-semialdehyde + phosphate + NADP(+) = L-glutamyl 5-phosphate + NADPH + H(+). It participates in amino-acid biosynthesis; L-proline biosynthesis; L-glutamate 5-semialdehyde from L-glutamate: step 2/2. Functionally, catalyzes the NADPH-dependent reduction of L-glutamate 5-phosphate into L-glutamate 5-semialdehyde and phosphate. The product spontaneously undergoes cyclization to form 1-pyrroline-5-carboxylate. This Carboxydothermus hydrogenoformans (strain ATCC BAA-161 / DSM 6008 / Z-2901) protein is Gamma-glutamyl phosphate reductase.